A 396-amino-acid chain; its full sequence is Elongation factor Tu (396 aa).

The 197-residue stretch at 10–206 folds into the tr-type G domain; sequence KPHVNVGTIG…AVDAYIPTPQ (197 aa). The G1 stretch occupies residues 19 to 26; that stretch reads GHVDHGKT. Position 19–26 (19–26) interacts with GTP; sequence GHVDHGKT. Position 26 (threonine 26) interacts with Mg(2+). Residues 60 to 64 are G2; it reads GITIA. A G3 region spans residues 81–84; sequence DCPG. GTP-binding positions include 81–85 and 136–139; these read DCPGH and NKVD. The interval 136–139 is G4; that stretch reads NKVD. The segment at 174 to 176 is G5; the sequence is SAL.

This sequence belongs to the TRAFAC class translation factor GTPase superfamily. Classic translation factor GTPase family. EF-Tu/EF-1A subfamily. As to quaternary structure, monomer.

The protein localises to the cytoplasm. The enzyme catalyses GTP + H2O = GDP + phosphate + H(+). Functionally, GTP hydrolase that promotes the GTP-dependent binding of aminoacyl-tRNA to the A-site of ribosomes during protein biosynthesis. The chain is Elongation factor Tu from Anaeromyxobacter dehalogenans (strain 2CP-C).